A 234-amino-acid polypeptide reads, in one-letter code: LexA repressor (234 aa).

The H-T-H motif DNA-binding region spans 26–46 (FDEMKDALDLRSKSGIHRLIT). Positions 80-107 (RGFTPSVIEGNLGKVRPPSPQHAEDDSD) are disordered. Active-site for autocatalytic cleavage activity residues include S155 and K193.

This sequence belongs to the peptidase S24 family. As to quaternary structure, homodimer.

It catalyses the reaction Hydrolysis of Ala-|-Gly bond in repressor LexA.. Its function is as follows. Represses a number of genes involved in the response to DNA damage (SOS response), including recA and lexA. In the presence of single-stranded DNA, RecA interacts with LexA causing an autocatalytic cleavage which disrupts the DNA-binding part of LexA, leading to derepression of the SOS regulon and eventually DNA repair. The sequence is that of LexA repressor from Rhodopseudomonas palustris (strain HaA2).